The following is an 86-amino-acid chain: Sec-independent protein translocase protein TatA (86 aa).

The chain crosses the membrane as a helical span at residues 3 to 23 (IFGVGLPEVTVILILALLIFG). Residues 56–86 (MNEEDESPKSIESNQTNEINQEKIDSENSKK) form a disordered region. Positions 65-74 (SIESNQTNEI) are enriched in polar residues. The segment covering 75–86 (NQEKIDSENSKK) has biased composition (basic and acidic residues).

It belongs to the TatA/E family. As to quaternary structure, forms a complex with TatC.

The protein resides in the cell inner membrane. In terms of biological role, part of the twin-arginine translocation (Tat) system that transports large folded proteins containing a characteristic twin-arginine motif in their signal peptide across membranes. TatA could form the protein-conducting channel of the Tat system. This is Sec-independent protein translocase protein TatA from Prochlorococcus marinus (strain MIT 9215).